Reading from the N-terminus, the 256-residue chain is UPF0644 protein PB2B4.06 (256 aa).

Residues 34-56 (GVVYAGVSGTCAAAGYMFGNFVM) traverse the membrane as a helical segment.

The protein belongs to the UPF0644 family.

It localises to the mitochondrion membrane. In Schizosaccharomyces pombe (strain 972 / ATCC 24843) (Fission yeast), this protein is UPF0644 protein PB2B4.06.